Consider the following 615-residue polypeptide: Forkhead box protein O (615 aa).

Disordered stretches follow at residues 39–77 (RARS…DSQQ), 182–205 (KSVR…RAKK), 217–269 (GLND…RLSP), 318–359 (FSAA…APGY), and 389–409 (NSVT…SDSL). T44 carries the phosphothreonine; by PKB/AKT1 modification. The segment covering 63 to 77 (TKASNQQLAPGDSQQ) has biased composition (polar residues). S75 is modified (phosphoserine). Positions 95–201 (WGNLSYADLI…ETSRYEKRRG (107 aa)) form a DNA-binding region, fork-head. S190 bears the Phosphoserine; by PKB/AKT1 mark. 2 stretches are compositionally biased toward polar residues: residues 221 to 230 (ATPSPSSSVS) and 256 to 265 (RASSNASSCG). A Phosphoserine; by PKB/AKT1 modification is found at S259. S262, S263, and S268 each carry phosphoserine. Residues 326–335 (SQPPPPPYQP) show a composition bias toward pro residues. The segment covering 336-351 (PQHQQAQQQQQQSPYA) has biased composition (low complexity).

In terms of assembly, interacts with melt.

Its subcellular location is the cytoplasm. It localises to the nucleus. Transcription factor involved in the regulation of the insulin signaling pathway. Consistently activates both the downstream target Thor\d4EBP and the feedback control target InR. Involved in negative regulation of the cell cycle, modulating cell growth and proliferation. In response to cellular stresses, such as nutrient deprivation or increased levels of reactive oxygen species, foxo is activated and inhibits growth through the action of target genes such as Thor. Foxo activated in the adult fat body can regulate lifespan in adults; an insulin peptide itself may function as one secondary messenger of insulin-regulated aging. Also regulates Lip4, homolog of human acid lipases, thereby acting as a key modulator of lipid metabolism by insulin signaling and integrates insulin responses to glucose and lipid homeostasis. In Drosophila erecta (Fruit fly), this protein is Forkhead box protein O.